The chain runs to 485 residues: Glutamyl-tRNA(Gln) amidotransferase subunit A (485 aa).

Residues Lys78 and Ser153 each act as charge relay system in the active site. Residue Ser177 is the Acyl-ester intermediate of the active site.

The protein belongs to the amidase family. GatA subfamily. In terms of assembly, heterotrimer of A, B and C subunits.

The catalysed reaction is L-glutamyl-tRNA(Gln) + L-glutamine + ATP + H2O = L-glutaminyl-tRNA(Gln) + L-glutamate + ADP + phosphate + H(+). Its function is as follows. Allows the formation of correctly charged Gln-tRNA(Gln) through the transamidation of misacylated Glu-tRNA(Gln) in organisms which lack glutaminyl-tRNA synthetase. The reaction takes place in the presence of glutamine and ATP through an activated gamma-phospho-Glu-tRNA(Gln). In Geobacter sp. (strain M21), this protein is Glutamyl-tRNA(Gln) amidotransferase subunit A.